We begin with the raw amino-acid sequence, 491 residues long: Tyrosine 3-monooxygenase (491 aa).

Residue serine 19 is modified to Phosphoserine; by CaMK2. Position 31 is a phosphoserine (serine 31). Serine 40 bears the Phosphoserine; by CaMK2 and PKA mark. The Fe cation site is built by histidine 324, histidine 329, and glutamate 369. Phosphoserine is present on serine 465.

The protein belongs to the biopterin-dependent aromatic amino acid hydroxylase family. As to quaternary structure, homotetramer. Interacts (when phosphorylated at Ser-19) with YWHAG; one YWHAG dimer bounds to one TH tetramer and this interaction may influence the phosphorylation and dephosphorylation of other sites. Interacts with NT5DC2; the interaction results in reduced phosphorylation and decreased catalytic activity of TH. Fe(2+) is required as a cofactor. In terms of processing, phosphorylated on Ser-19, Ser-31 and Ser-40 by several protein kinases with different site specificities. Phosphorylation at Ser-31 and Ser-40 leads to an increase of TH activity. Phosphorylation at Ser-40 activates the enzyme and also counteracts the feedback inhibition of TH by catecholamines. Phosphorylation of Ser-19 and Ser-31 triggers the proteasomal degradation of TH through the ubiquitin-proteasome pathway. Phosphorylation at Ser-31 facilitates transport of TH from the soma to the nerve terminals via the microtubule network. Phosphorylation at Ser-19 induces the high-affinity binding to the 14-3-3 protein YWHAG; this interaction may influence the phosphorylation and dephosphorylation of other sites. Ser-19 increases the phosphorylation at Ser-40 in a hierarchical manner, leading to increased activity.

It localises to the cytoplasm. It is found in the perinuclear region. The protein resides in the nucleus. Its subcellular location is the cell projection. The protein localises to the axon. It localises to the cytoplasmic vesicle. It is found in the secretory vesicle. The protein resides in the synaptic vesicle. It catalyses the reaction (6R)-L-erythro-5,6,7,8-tetrahydrobiopterin + L-tyrosine + O2 = (4aS,6R)-4a-hydroxy-L-erythro-5,6,7,8-tetrahydrobiopterin + L-dopa. It participates in catecholamine biosynthesis; dopamine biosynthesis; dopamine from L-tyrosine: step 1/2. With respect to regulation, inhibited in feedback fashion by the catecholamine neurotransmitters, especially by dopamine in competition with tetrahydrobiopterin. Phosphorylation of several Ser/Thr residues in the N-terminus regulates the catalytic activity. Ser-31 and Ser-40 are readily phosphorylated to activate the catalytic activity. A Cysteine modification induced by N-ethylmaleimide (NEM), inhibits tyrosine 3-monooxygenase activity through the modification of the Cys-170. Its function is as follows. Catalyzes the conversion of L-tyrosine to L-dihydroxyphenylalanine (L-Dopa), the rate-limiting step in the biosynthesis of catecholamines, dopamine, noradrenaline, and adrenaline. Uses tetrahydrobiopterin and molecular oxygen to convert tyrosine to L-Dopa. In addition to tyrosine, is able to catalyze the hydroxylation of phenylalanine and tryptophan with lower specificity. Positively regulates the regression of retinal hyaloid vessels during postnatal development. In Bos taurus (Bovine), this protein is Tyrosine 3-monooxygenase (TH).